Consider the following 208-residue polypeptide: FMN-dependent NADH:quinone oxidoreductase 2 (208 aa).

17-19 (SVS) serves as a coordination point for FMN.

The protein belongs to the azoreductase type 1 family. Homodimer. FMN is required as a cofactor.

It catalyses the reaction 2 a quinone + NADH + H(+) = 2 a 1,4-benzosemiquinone + NAD(+). The enzyme catalyses N,N-dimethyl-1,4-phenylenediamine + anthranilate + 2 NAD(+) = 2-(4-dimethylaminophenyl)diazenylbenzoate + 2 NADH + 2 H(+). Its function is as follows. Quinone reductase that provides resistance to thiol-specific stress caused by electrophilic quinones. Also exhibits azoreductase activity. Catalyzes the reductive cleavage of the azo bond in aromatic azo compounds to the corresponding amines. This Halalkalibacterium halodurans (strain ATCC BAA-125 / DSM 18197 / FERM 7344 / JCM 9153 / C-125) (Bacillus halodurans) protein is FMN-dependent NADH:quinone oxidoreductase 2.